A 317-amino-acid polypeptide reads, in one-letter code: Protein-methionine-sulfoxide reductase catalytic subunit MsrP (317 aa).

A signal peptide (tat-type signal) is located at residues 1–40 (MNKFTKTDVTPEKLFIQRRKIIQGMSVLSAAAAFPNLAAA). Residues asparagine 72, 75–76 (YE), cysteine 129, threonine 164, asparagine 216, arginine 221, and 232–234 (SIK) contribute to the Mo-molybdopterin site.

Belongs to the MsrP family. In terms of assembly, heterodimer of a catalytic subunit (MsrP) and a heme-binding subunit (MsrQ). It depends on Mo-molybdopterin as a cofactor. Post-translationally, predicted to be exported by the Tat system. The position of the signal peptide cleavage has not been experimentally proven.

The protein localises to the periplasm. It carries out the reaction L-methionyl-[protein] + a quinone + H2O = L-methionyl-(S)-S-oxide-[protein] + a quinol. The enzyme catalyses L-methionyl-[protein] + a quinone + H2O = L-methionyl-(R)-S-oxide-[protein] + a quinol. Part of the MsrPQ system that repairs oxidized periplasmic proteins containing methionine sulfoxide residues (Met-O), using respiratory chain electrons. Thus protects these proteins from oxidative-stress damage caused by reactive species of oxygen and chlorine generated by the host defense mechanisms. MsrPQ is essential for the maintenance of envelope integrity under bleach stress, rescuing a wide series of structurally unrelated periplasmic proteins from methionine oxidation. The catalytic subunit MsrP is non-stereospecific, being able to reduce both (R-) and (S-) diastereoisomers of methionine sulfoxide. This Actinobacillus succinogenes (strain ATCC 55618 / DSM 22257 / CCUG 43843 / 130Z) protein is Protein-methionine-sulfoxide reductase catalytic subunit MsrP.